A 427-amino-acid polypeptide reads, in one-letter code: Enolase (427 aa).

Q163 is a binding site for (2R)-2-phosphoglycerate. E205 serves as the catalytic Proton donor. The Mg(2+) site is built by D242, E285, and D312. Residues K337, R366, S367, and K388 each contribute to the (2R)-2-phosphoglycerate site. Catalysis depends on K337, which acts as the Proton acceptor.

Belongs to the enolase family. It depends on Mg(2+) as a cofactor.

It localises to the cytoplasm. The protein localises to the secreted. The protein resides in the cell surface. It catalyses the reaction (2R)-2-phosphoglycerate = phosphoenolpyruvate + H2O. The protein operates within carbohydrate degradation; glycolysis; pyruvate from D-glyceraldehyde 3-phosphate: step 4/5. In terms of biological role, catalyzes the reversible conversion of 2-phosphoglycerate (2-PG) into phosphoenolpyruvate (PEP). It is essential for the degradation of carbohydrates via glycolysis. The chain is Enolase from Bradyrhizobium sp. (strain ORS 278).